The following is a 417-amino-acid chain: Secreted aspartic protease 4 (417 aa).

Positions 1-18 (MFLQNILSVLAFALLIDA) are cleaved as a signal peptide. Positions 19–75 (APVKRSTGFVTLDFNVKRSLVDPKDPTVEVKRSPLFLDIEPTEIPVDDTGRNDVGKR) are cleaved as a propeptide — activation peptide. Residues 89-403 (YSADITIGSN…DLDDRKISMA (315 aa)) enclose the Peptidase A1 domain. D107 is an active-site residue. 107 to 109 (DTG) is a pepstatin A binding site. A disulfide bridge links C122 with C134. A glycan (N-linked (GlcNAc...) asparagine) is linked at N137. 160–161 (AD) contributes to the pepstatin A binding site. D267 lines the Zn(2+) pocket. D293 is a catalytic residue. 293-297 (DSGTT) is a pepstatin A binding site. C331 and C369 are disulfide-bonded.

It belongs to the peptidase A1 family. Monomer.

It localises to the secreted. The enzyme catalyses Preferential cleavage at the carboxyl of hydrophobic amino acids, but fails to cleave 15-Leu-|-Tyr-16, 16-Tyr-|-Leu-17 and 24-Phe-|-Phe-25 of insulin B chain. Activates trypsinogen, and degrades keratin.. Its activity is regulated as follows. Activity is inhibited by squash aspartic peptidase inhibitor (SQAPI). Functionally, secreted aspartic peptidases (SAPs) are a group of ten acidic hydrolases considered as key virulence factors. These enzymes supply the fungus with nutrient amino acids as well as are able to degrade the selected host's proteins involved in the immune defense. Moreover, acts toward human hemoglobin though limited proteolysis to generate a variety of antimicrobial hemocidins, enabling to compete with the other microorganisms of the same physiological niche using the microbicidal peptides generated from the host protein. In terms of biological role, plays a key role in defense against host by cleaving histatin-5 (Hst 5), a peptide from human saliva that carries out fungicidal activity. The cleavage rate decreases in an order of SAP2 &gt; SAP9 &gt; SAP3 &gt; SAP7 &gt; SAP4 &gt; SAP1 &gt; SAP8. The first cleavage occurs between residues 'Lys-17' and 'His-18' of Hst 5, giving DSHAKRHHGYKRKFHEK and HHSHRGY peptides. Simultaneously, the DSHAKRHHGY and KRKFHEKHHSHRGY peptides are also formed. This is Secreted aspartic protease 4 from Candida albicans (strain SC5314 / ATCC MYA-2876) (Yeast).